The following is a 362-amino-acid chain: Cobalt-precorrin-5B C(1)-methyltransferase (362 aa).

The protein belongs to the CbiD family.

It carries out the reaction Co-precorrin-5B + S-adenosyl-L-methionine = Co-precorrin-6A + S-adenosyl-L-homocysteine. It functions in the pathway cofactor biosynthesis; adenosylcobalamin biosynthesis; cob(II)yrinate a,c-diamide from sirohydrochlorin (anaerobic route): step 6/10. Catalyzes the methylation of C-1 in cobalt-precorrin-5B to form cobalt-precorrin-6A. The polypeptide is Cobalt-precorrin-5B C(1)-methyltransferase (Burkholderia vietnamiensis (strain G4 / LMG 22486) (Burkholderia cepacia (strain R1808))).